Consider the following 173-residue polypeptide: uncharacterized protein (173 aa).

Residues 49–72 (PTRSGRTSNSGNRGPVMTSTSSIN) form a disordered region.

This is an uncharacterized protein from Human adenovirus B serotype 7 (HAdV-7).